The sequence spans 368 residues: L-lactate oxidase (368 aa).

Residues 13 to 368 form the FMN hydroxy acid dehydrogenase domain; it reads VNAIDVLDLA…KQMKVKTTFA (356 aa). Tyr39 contributes to the pyruvate binding site. Residues 92-94, Ser121, and Gln143 contribute to the FMN site; that span reads PIA. Residue Tyr145 participates in pyruvate binding. Thr171 serves as a coordination point for FMN. A pyruvate-binding site is contributed by Arg180. Lys239 and Ser261 together coordinate FMN. Pyruvate contacts are provided by His263 and Arg266. His263 (proton acceptor) is an active-site residue. Residues 294 to 298 and Arg318 contribute to the FMN site; that span reads DGGVQ.

This sequence belongs to the FMN-dependent alpha-hydroxy acid dehydrogenase family. As to quaternary structure, homotetramer. FMN serves as cofactor.

The catalysed reaction is (S)-lactate + O2 = pyruvate + H2O2. It carries out the reaction 2-hydroxyoctanoate + O2 = 2-oxooctanoate + H2O2. Its function is as follows. Catalyzes the oxidation of (S)-lactate (L-lactate) to pyruvate, with a reduction of O2 to H2O2. To a lesser extent is also able to use 2-hydroxyoctanoate as substrate. May be involved in the utilization of L-lactate as an energy source for growth. In Lacticaseibacillus rhamnosus (strain LMS2-1), this protein is L-lactate oxidase.